The chain runs to 151 residues: Probable transport accessory protein MmpS1 (151 aa).

2 helical membrane-spanning segments follow: residues 8-28 (FWIP…VSRL) and 81-101 (VVNA…AVVA).

This sequence belongs to the MmpS family.

It localises to the cell membrane. The sequence is that of Probable transport accessory protein MmpS1 (mmpS1) from Mycobacterium tuberculosis (strain CDC 1551 / Oshkosh).